The following is a 246-amino-acid chain: Exosome complex component Rrp41 (246 aa).

It belongs to the RNase PH family. Rrp41 subfamily. Component of the archaeal exosome complex. Forms a hexameric ring-like arrangement composed of 3 Rrp41-Rrp42 heterodimers. The hexameric ring associates with a trimer of Rrp4 and/or Csl4 subunits.

It is found in the cytoplasm. Its function is as follows. Catalytic component of the exosome, which is a complex involved in RNA degradation. Has 3'-&gt;5' exoribonuclease activity. Can also synthesize heteromeric RNA-tails. In Pyrobaculum calidifontis (strain DSM 21063 / JCM 11548 / VA1), this protein is Exosome complex component Rrp41.